Here is a 205-residue protein sequence, read N- to C-terminus: uncharacterized protein (205 aa).

Residues Asp26–Ile129 form the HD domain.

This is an uncharacterized protein from Bacillus subtilis (strain 168).